The primary structure comprises 505 residues: ATP synthase subunit alpha (505 aa).

170–177 (GDRQTGKT) contributes to the ATP binding site.

Belongs to the ATPase alpha/beta chains family. In terms of assembly, F-type ATPases have 2 components, CF(1) - the catalytic core - and CF(0) - the membrane proton channel. CF(1) has five subunits: alpha(3), beta(3), gamma(1), delta(1), epsilon(1). CF(0) has four main subunits: a(1), b(1), b'(1) and c(9-12).

It is found in the cellular thylakoid membrane. It carries out the reaction ATP + H2O + 4 H(+)(in) = ADP + phosphate + 5 H(+)(out). Produces ATP from ADP in the presence of a proton gradient across the membrane. The alpha chain is a regulatory subunit. The polypeptide is ATP synthase subunit alpha (Prochlorococcus marinus subsp. pastoris (strain CCMP1986 / NIES-2087 / MED4)).